We begin with the raw amino-acid sequence, 413 residues long: Coiled-coil domain-containing protein 83 (413 aa).

Coiled-coil stretches lie at residues His-32 to Arg-186 and Ile-215 to Asn-255.

The sequence is that of Coiled-coil domain-containing protein 83 (CCDC83) from Bos taurus (Bovine).